The sequence spans 308 residues: Mycothiol acetyltransferase (308 aa).

N-acetyltransferase domains lie at 8–155 and 160–308; these read RDVD…PRLR and VQVR…RRAR. A 1D-myo-inositol 2-(L-cysteinylamino)-2-deoxy-alpha-D-glucopyranoside-binding site is contributed by Glu39. Residue 84–86 participates in acetyl-CoA binding; it reads LVV. The 1D-myo-inositol 2-(L-cysteinylamino)-2-deoxy-alpha-D-glucopyranoside site is built by Glu187, Lys226, and Glu240. Residues 244–246 and 251–257 each bind acetyl-CoA; these read LGI and QGLGLGR. Residue Tyr278 coordinates 1D-myo-inositol 2-(L-cysteinylamino)-2-deoxy-alpha-D-glucopyranoside.

The protein belongs to the acetyltransferase family. MshD subfamily. Monomer.

The catalysed reaction is 1D-myo-inositol 2-(L-cysteinylamino)-2-deoxy-alpha-D-glucopyranoside + acetyl-CoA = mycothiol + CoA + H(+). Functionally, catalyzes the transfer of acetyl from acetyl-CoA to desacetylmycothiol (Cys-GlcN-Ins) to form mycothiol. The sequence is that of Mycothiol acetyltransferase from Geodermatophilus obscurus (strain ATCC 25078 / DSM 43160 / JCM 3152 / CCUG 61914 / KCC A-0152 / KCTC 9177 / NBRC 13315 / NRRL B-3577 / G-20).